A 379-amino-acid polypeptide reads, in one-letter code: MFLKSLHLRHFRNYSEQSVTFAAPKTILVGDNAQGKSNLLEAVEWLATLQSHRTHRDRDLIQQGHESAQIEATLERQGVPLDLAVSLRPSSGRVLRVNGCTVKRTADFLGQLNAVEFSCLDLELVRGTPAIRRNWLDRILLQLEPLYSQLLQTYQKALRQRNALLKQAGSQGWDEALWQAWNQQLVINGTRIIRRRQRLIERLAPLAQDWHRVLSGDRETLTLSYESHVPLGDGTSEAIVAAFSEALATRRAIEFLQKTSLVGPHRDDVGFCLNAQSARQFASQGQQRTLVLALKLAELALVESVVGDTPLLLLDDVLAELDLQRQGILLEVMGDRYQTLMTTTHLAPFAAPWRQQAQILKVTAGTIASVSDTAAQTSD.

30-37 provides a ligand contact to ATP; it reads GDNAQGKS.

It belongs to the RecF family.

It localises to the cytoplasm. Its function is as follows. The RecF protein is involved in DNA metabolism; it is required for DNA replication and normal SOS inducibility. RecF binds preferentially to single-stranded, linear DNA. It also seems to bind ATP. This is DNA replication and repair protein RecF from Thermosynechococcus vestitus (strain NIES-2133 / IAM M-273 / BP-1).